The sequence spans 102 residues: Putative pterin-4-alpha-carbinolamine dehydratase (102 aa).

This sequence belongs to the pterin-4-alpha-carbinolamine dehydratase family.

It carries out the reaction (4aS,6R)-4a-hydroxy-L-erythro-5,6,7,8-tetrahydrobiopterin = (6R)-L-erythro-6,7-dihydrobiopterin + H2O. This is Putative pterin-4-alpha-carbinolamine dehydratase from Psychromonas ingrahamii (strain DSM 17664 / CCUG 51855 / 37).